A 405-amino-acid polypeptide reads, in one-letter code: NADH-quinone oxidoreductase subunit D (405 aa).

It belongs to the complex I 49 kDa subunit family. As to quaternary structure, NDH-1 is composed of 14 different subunits. Subunits NuoB, C, D, E, F, and G constitute the peripheral sector of the complex.

Its subcellular location is the cell inner membrane. The enzyme catalyses a quinone + NADH + 5 H(+)(in) = a quinol + NAD(+) + 4 H(+)(out). In terms of biological role, NDH-1 shuttles electrons from NADH, via FMN and iron-sulfur (Fe-S) centers, to quinones in the respiratory chain. The immediate electron acceptor for the enzyme in this species is believed to be ubiquinone. Couples the redox reaction to proton translocation (for every two electrons transferred, four hydrogen ions are translocated across the cytoplasmic membrane), and thus conserves the redox energy in a proton gradient. The protein is NADH-quinone oxidoreductase subunit D of Sphingopyxis alaskensis (strain DSM 13593 / LMG 18877 / RB2256) (Sphingomonas alaskensis).